A 582-amino-acid polypeptide reads, in one-letter code: Tetratricopeptide repeat protein 24 (582 aa).

Residues 1 to 31 (MSSPNPEDVPRRPEPEPSSSNKKKKKRKWLR) are disordered. TPR repeat units follow at residues 36–69 (IQALTRAGHGALQAGQNHEALNNFQRAFLLASKA), 79–112 (QACAFNLGAAYVETGDPARGLELLLRAHPEEKAQ), 117–150 (GDQCFNVALAYHALGELPQALAWYHRALGHYQPQ), 154–187 (GEAWAKMGACYQALGQPELAAHCLQEASQAYAQE), 236–271 (GHLYNDLGLGYSQLQLFPLAVEAFLQALPLCWVPGE), 273–306 (ATVLRNLGMAHNALGNYQEAREFHQKAADLHGSV), 313–346 (GRSFGSLAFALSQLGDHKAARDNYLHALQAARDS), and 353–386 (WQACEGLGAAAARLGQYDQALKYYKEALAQCQKE). 2 disordered regions span residues 418-481 (TSAP…RAGP) and 548-582 (VPNGPQANRSSRWPRESLSRSRQRRPMESGICTIV). Residues 441-454 (GSSTAGVQHRSSSG) are compositionally biased toward polar residues. The span at 462 to 472 (EGHQKKKEERS) shows a compositional bias: basic and acidic residues.

In Homo sapiens (Human), this protein is Tetratricopeptide repeat protein 24 (TTC24).